Reading from the N-terminus, the 149-residue chain is Protein FAM72A (149 aa).

It belongs to the FAM72 family. In terms of assembly, interacts with UNG. Expressed at high levels in stomach and also in kidney and, at low levels, in heart (at protein level). In the stomach, highly expressed in foveolar cells, parietal cells and chief cells (at protein level). In kidney, expressed in endothelial cells, mesangial and epithelial cells (parietal and visceral epithelium) around glomerulus (at protein level).

It localises to the cytoplasm. The protein localises to the mitochondrion. Its function is as follows. May play a role in the regulation of cellular reactive oxygen species metabolism. May participate in cell growth regulation. The polypeptide is Protein FAM72A (Fam72a) (Rattus norvegicus (Rat)).